Consider the following 116-residue polypeptide: Large ribosomal subunit protein uL18 (116 aa).

It belongs to the universal ribosomal protein uL18 family. As to quaternary structure, part of the 50S ribosomal subunit; part of the 5S rRNA/L5/L18/L25 subcomplex. Contacts the 5S and 23S rRNAs.

Functionally, this is one of the proteins that bind and probably mediate the attachment of the 5S RNA into the large ribosomal subunit, where it forms part of the central protuberance. The sequence is that of Large ribosomal subunit protein uL18 from Pseudomonas fluorescens (strain SBW25).